The sequence spans 319 residues: Urease accessory protein UreD (319 aa).

The segment at 284 to 319 (RLSTPQPPREWPLQEEGTFSNERFTKDHQSPSASPH) is disordered.

It belongs to the UreD family. In terms of assembly, ureD, UreF and UreG form a complex that acts as a GTP-hydrolysis-dependent molecular chaperone, activating the urease apoprotein by helping to assemble the nickel containing metallocenter of UreC. The UreE protein probably delivers the nickel.

The protein resides in the cytoplasm. Functionally, required for maturation of urease via the functional incorporation of the urease nickel metallocenter. In Prochlorococcus marinus (strain MIT 9313), this protein is Urease accessory protein UreD.